Reading from the N-terminus, the 498-residue chain is Acetylcholine receptor subunit alpha-type acr-16 (498 aa).

Positions 1–19 (MSVCTLLISCAILAAPTLG) are cleaved as a signal peptide. The Extracellular portion of the chain corresponds to 20–230 (SLQERRLYED…FYLHMRRRTL (211 aa)). N-linked (GlcNAc...) asparagine glycans are attached at residues N43 and N93. Disulfide bonds link C147–C161 and C211–C212. 3 consecutive transmembrane segments (helical) span residues 231–252 (YYGF…LGFT), 261–279 (ITLQ…SIVS), and 295–314 (FFTC…VYVL). At 315–472 (NLHYRTPETH…WKFAAMVVDR (158 aa)) the chain is on the cytoplasmic side. A helical membrane pass occupies residues 473-493 (LCLYVFTIFIIVSTIGIFWSA).

This sequence belongs to the ligand-gated ion channel (TC 1.A.9) family. Acetylcholine receptor (TC 1.A.9.1) subfamily. Expressed in the body wall muscle.

The protein localises to the postsynaptic cell membrane. The protein resides in the cell membrane. After binding acetylcholine, the AChR responds by an extensive change in conformation that affects all subunits and leads to opening of an ion-conducting channel across the plasma membrane. A subunit of the levamisole-insensitive nicotinic receptor. The sequence is that of Acetylcholine receptor subunit alpha-type acr-16 (acr-16) from Caenorhabditis elegans.